A 328-amino-acid polypeptide reads, in one-letter code: Octanoyltransferase, mitochondrial (328 aa).

Residues 108 to 312 form the BPL/LPL catalytic domain; that stretch reads MKPNPIILTF…EMTKLLGIKT (205 aa). Substrate is bound by residues 162-169, 241-243, and 254-256; these read RGGQVTFH, SVG, and GVA. The Acyl-thioester intermediate role is filled by C272.

The protein belongs to the LipB family.

Its subcellular location is the mitochondrion. The catalysed reaction is octanoyl-[ACP] + L-lysyl-[protein] = N(6)-octanoyl-L-lysyl-[protein] + holo-[ACP] + H(+). The protein operates within protein modification; protein lipoylation via endogenous pathway; protein N(6)-(lipoyl)lysine from octanoyl-[acyl-carrier-protein]: step 1/2. Catalyzes the transfer of endogenously produced octanoic acid from octanoyl-acyl-carrier-protein onto the lipoyl domains of lipoate-dependent enzymes. Lipoyl-ACP can also act as a substrate although octanoyl-ACP is likely to be the physiological substrate. The protein is Octanoyltransferase, mitochondrial (LIP2) of Saccharomyces cerevisiae (strain ATCC 204508 / S288c) (Baker's yeast).